A 161-amino-acid polypeptide reads, in one-letter code: AP-1 complex subunit sigma-1 (161 aa).

The protein belongs to the adaptor complexes small subunit family. In terms of assembly, adaptor protein complex 1 (AP-1) is a heterotetramer composed of two large adaptins (gamma-type subunit and beta-type subunit), a medium adaptin (mu-type subunit) and a small adaptin (sigma-type subunit). As to expression, expressed in seedlings, roots, stems, leaves, flowers and siliques (developing fruits and seeds).

Its subcellular location is the golgi apparatus. The protein resides in the cytoplasmic vesicle. It is found in the clathrin-coated vesicle membrane. Its function is as follows. Subunit of clathrin-associated adaptor protein complex 1 that plays a role in protein sorting at the trans-Golgi network and early endosomes (TGN/EE). The AP complexes mediate the recruitment of clathrin to membranes and the recognition of sorting signals within the cytosolic tails of transmembrane cargo molecules. The polypeptide is AP-1 complex subunit sigma-1 (AAP19-1) (Arabidopsis thaliana (Mouse-ear cress)).